The following is an 803-amino-acid chain: Phenylalanine--tRNA ligase beta subunit (803 aa).

A tRNA-binding domain is found at Thr39–Ala152. Residues Arg406–Val480 enclose the B5 domain. Positions 458, 464, 467, and 468 each coordinate Mg(2+). Residues Pro709–Arg802 form the FDX-ACB domain.

It belongs to the phenylalanyl-tRNA synthetase beta subunit family. Type 1 subfamily. Tetramer of two alpha and two beta subunits. The cofactor is Mg(2+).

The protein resides in the cytoplasm. The enzyme catalyses tRNA(Phe) + L-phenylalanine + ATP = L-phenylalanyl-tRNA(Phe) + AMP + diphosphate + H(+). This is Phenylalanine--tRNA ligase beta subunit from Moorella thermoacetica (strain ATCC 39073 / JCM 9320).